The following is a 269-amino-acid chain: Regulatory protein RecX (269 aa).

It belongs to the RecX family.

The protein resides in the cytoplasm. Functionally, modulates RecA activity. The sequence is that of Regulatory protein RecX from Geobacillus kaustophilus (strain HTA426).